A 452-amino-acid polypeptide reads, in one-letter code: Membrane-bound acylglycerophosphatidylinositol O-acyltransferase mboa-7 (452 aa).

The next 4 membrane-spanning stretches (helical) occupy residues 4-24 (IIGLMSRDDWVYTGLLLFSFA), 53-73 (PRIAYSLGICAIAVGIQAFAP), 79-99 (FYVFLTTFTYLMFVRFAHYFL), and 104-124 (VASHTNVIQLIITLRIIGITF). N-linked (GlcNAc...) asparagine glycosylation occurs at N137. 3 consecutive transmembrane segments (helical) span residues 153–173 (FAYFYHFCGLFTGPYYTYQML), 220–240 (AIWEVSFFTRLVYAALIFVVF), and 244–264 (VYSAWAIAESICVILGIGIYP). A glycan (N-linked (GlcNAc...) asparagine) is linked at N319. The active site involves H350. Residues 354–374 (AGYFMSFGVVAMCAILEDVIF) form a helical membrane-spanning segment. N414 carries an N-linked (GlcNAc...) asparagine glycan. The helical transmembrane segment at 421–441 (FWSSIYYWLPLLCVPFYIYSV) threads the bilayer.

Belongs to the membrane-bound acyltransferase family.

It is found in the membrane. The enzyme catalyses a 1-acyl-sn-glycero-3-phospho-(1D-myo-inositol) + an acyl-CoA = a 1,2-diacyl-sn-glycero-3-phospho-(1D-myo-inositol) + CoA. It carries out the reaction a fatty acyl-[ACP] + a 1-acyl-sn-glycero-3-phosphate = a 1,2-diacyl-sn-glycero-3-phosphate + holo-[ACP]. The protein operates within lipid metabolism; phospholipid metabolism. Acyltransferase which mediates the conversion of lysophosphatidylinositol (1-acylglycerophosphatidylinositol or LPI) into phosphatidylinositol (1,2-diacyl-sn-glycero-3-phosphoinositol or PI) (LPIAT activity). Prefers arachidonoyl-CoA or eicosapentaenoic acid (EPA) as the acyl donor. Prefers sn-2-LPI rather than sn-1-LPI as the acyl acceptor. Lysophospholipid acyltransferases (LPLATs) catalyze the reacylation step of the phospholipid remodeling pathway also known as the Lands cycle. This chain is Membrane-bound acylglycerophosphatidylinositol O-acyltransferase mboa-7, found in Caenorhabditis briggsae.